Consider the following 202-residue polypeptide: Securin (202 aa).

N-acetylalanine is present on Ala-2. The segment at 35-90 (LDGRSQVSTPRFGKTFDAPPALPKATRKALGTVNRATEKSVKTKGPLKQKQPSFSA) is disordered. A D-box motif is present at residues 61–64 (RKAL). 2 consecutive short sequence motifs (TEK-box) follow at residues 71–73 (TEK) and 94–96 (TEK). Residues 163 to 173 (PPSPVKMPSPP) carry the SH3-binding motif. Ser-165 carries the phosphoserine; by CDK1 modification.

It belongs to the securin family. As to quaternary structure, interacts with RPS10 and DNAJA1. Interacts with the caspase-like ESPL1, and prevents its protease activity probably by covering its active site. Interacts with TP53 and blocks its activity probably by blocking its binding to DNA. Interacts with the Ku 70 kDa subunit of ds-DNA kinase. Interacts with PTTG1IP. In terms of processing, phosphorylated at Ser-165 by CDK1 during mitosis. Phosphorylated in vitro by ds-DNA kinase. Post-translationally, ubiquitinated through 'Lys-11' linkage of ubiquitin moieties by the anaphase promoting complex (APC) at the onset of anaphase, conducting to its degradation. 'Lys-11'-linked ubiquitination is mediated by the E2 ligase UBE2C/UBCH10. As to expression, expressed at low level in most tissues, except in adult testis, where it is highly expressed. Overexpressed in many patients suffering from pituitary adenomas, primary epithelial neoplasias, and esophageal cancer.

It is found in the cytoplasm. Its subcellular location is the nucleus. Regulatory protein, which plays a central role in chromosome stability, in the p53/TP53 pathway, and DNA repair. Probably acts by blocking the action of key proteins. During the mitosis, it blocks Separase/ESPL1 function, preventing the proteolysis of the cohesin complex and the subsequent segregation of the chromosomes. At the onset of anaphase, it is ubiquitinated, conducting to its destruction and to the liberation of ESPL1. Its function is however not limited to a blocking activity, since it is required to activate ESPL1. Negatively regulates the transcriptional activity and related apoptosis activity of TP53. The negative regulation of TP53 may explain the strong transforming capability of the protein when it is overexpressed. May also play a role in DNA repair via its interaction with Ku, possibly by connecting DNA damage-response pathways with sister chromatid separation. The sequence is that of Securin (PTTG1) from Homo sapiens (Human).